The primary structure comprises 1422 residues: DNA-directed RNA polymerase subunit beta (1422 aa).

Positions 1392–1422 (QAAREAAERDLGGGPLGAPRGAVASGEKSSA) are disordered.

This sequence belongs to the RNA polymerase beta chain family. In terms of assembly, the RNAP catalytic core consists of 2 alpha, 1 beta, 1 beta' and 1 omega subunit. When a sigma factor is associated with the core the holoenzyme is formed, which can initiate transcription.

The enzyme catalyses RNA(n) + a ribonucleoside 5'-triphosphate = RNA(n+1) + diphosphate. Its function is as follows. DNA-dependent RNA polymerase catalyzes the transcription of DNA into RNA using the four ribonucleoside triphosphates as substrates. The chain is DNA-directed RNA polymerase subunit beta from Anaeromyxobacter dehalogenans (strain 2CP-1 / ATCC BAA-258).